Here is a 232-residue protein sequence, read N- to C-terminus: Large ribosomal subunit protein uL1 (232 aa).

This sequence belongs to the universal ribosomal protein uL1 family. In terms of assembly, part of the 50S ribosomal subunit.

In terms of biological role, binds directly to 23S rRNA. The L1 stalk is quite mobile in the ribosome, and is involved in E site tRNA release. Protein L1 is also a translational repressor protein, it controls the translation of the L11 operon by binding to its mRNA. The polypeptide is Large ribosomal subunit protein uL1 (Liberibacter asiaticus (Citrus greening disease)).